The primary structure comprises 402 residues: Imidazolonepropionase (402 aa).

The Fe(3+) site is built by His66 and His68. Residues His66 and His68 each contribute to the Zn(2+) site. The 4-imidazolone-5-propanoate site is built by Arg75, Tyr138, and His171. Residue Tyr138 coordinates N-formimidoyl-L-glutamate. Position 236 (His236) interacts with Fe(3+). A Zn(2+)-binding site is contributed by His236. Position 239 (Gln239) interacts with 4-imidazolone-5-propanoate. A Fe(3+)-binding site is contributed by Asp311. Asp311 contributes to the Zn(2+) binding site. Positions 313 and 315 each coordinate N-formimidoyl-L-glutamate. Thr316 is a binding site for 4-imidazolone-5-propanoate.

Belongs to the metallo-dependent hydrolases superfamily. HutI family. The cofactor is Zn(2+). Fe(3+) is required as a cofactor.

It localises to the cytoplasm. The catalysed reaction is 4-imidazolone-5-propanoate + H2O = N-formimidoyl-L-glutamate. The protein operates within amino-acid degradation; L-histidine degradation into L-glutamate; N-formimidoyl-L-glutamate from L-histidine: step 3/3. Functionally, catalyzes the hydrolytic cleavage of the carbon-nitrogen bond in imidazolone-5-propanoate to yield N-formimidoyl-L-glutamate. It is the third step in the universal histidine degradation pathway. This is Imidazolonepropionase from Pseudomonas aeruginosa (strain UCBPP-PA14).